A 565-amino-acid polypeptide reads, in one-letter code: uncharacterized protein (565 aa).

5 consecutive transmembrane segments (helical) span residues 4–26, 33–55, 68–90, 97–119, and 162–184; these read FVQF…AVWV, GYGL…VGAA, SLLY…VNAL, YAIL…TQFF, and ISAM…IILL. RCK C-terminal domains lie at 210-295 and 296-379; these read PNVD…LGPE and VPDA…IFGV. 5 consecutive transmembrane segments (helical) span residues 389–411, 415–432, 453–472, 482–504, and 539–561; these read LLTL…PAFG, GLGN…VSSI, LGLI…DLLT, IFIV…GFHI, and WLGF…YFAM.

The protein belongs to the AAE transporter (TC 2.A.81) family.

The protein localises to the cell membrane. This is an uncharacterized protein from Bordetella parapertussis (strain 12822 / ATCC BAA-587 / NCTC 13253).